The following is a 184-amino-acid chain: PXMP2/4 family protein 3 (184 aa).

The N-terminal stretch at 1 to 44 (MSNSKPLSLTDAVTTWYMKKLKSKPIQTKALTSATLSFISSVVA) is a signal peptide. 3 helical membrane passes run 58–78 (VVKF…WHII), 97–117 (IVDQ…VLAI), and 159–179 (LRVL…SILA).

It belongs to the peroxisomal membrane protein PXMP2/4 family.

The protein resides in the membrane. This Dictyostelium discoideum (Social amoeba) protein is PXMP2/4 family protein 3.